Reading from the N-terminus, the 198-residue chain is Probable chemoreceptor glutamine deamidase CheD (198 aa).

This sequence belongs to the CheD family.

The catalysed reaction is L-glutaminyl-[protein] + H2O = L-glutamyl-[protein] + NH4(+). Functionally, probably deamidates glutamine residues to glutamate on methyl-accepting chemotaxis receptors (MCPs), playing an important role in chemotaxis. This Stenotrophomonas maltophilia (strain R551-3) protein is Probable chemoreceptor glutamine deamidase CheD.